The primary structure comprises 324 residues: o-succinylbenzoate synthase (324 aa).

The Proton donor role is filled by lysine 135. Residues aspartate 163, glutamate 192, and aspartate 215 each contribute to the Mg(2+) site. Lysine 237 acts as the Proton acceptor in catalysis.

Belongs to the mandelate racemase/muconate lactonizing enzyme family. MenC type 1 subfamily. A divalent metal cation serves as cofactor.

It catalyses the reaction (1R,6R)-6-hydroxy-2-succinyl-cyclohexa-2,4-diene-1-carboxylate = 2-succinylbenzoate + H2O. The protein operates within quinol/quinone metabolism; 1,4-dihydroxy-2-naphthoate biosynthesis; 1,4-dihydroxy-2-naphthoate from chorismate: step 4/7. It participates in quinol/quinone metabolism; menaquinone biosynthesis. In terms of biological role, converts 2-succinyl-6-hydroxy-2,4-cyclohexadiene-1-carboxylate (SHCHC) to 2-succinylbenzoate (OSB). This Aliivibrio fischeri (strain MJ11) (Vibrio fischeri) protein is o-succinylbenzoate synthase.